We begin with the raw amino-acid sequence, 210 residues long: ATP-dependent dethiobiotin synthetase BioD (210 aa).

N12–H17 lines the ATP pocket. Residue T16 coordinates Mg(2+). K37 is a catalytic residue. T41 lines the substrate pocket. E114 serves as a coordination point for Mg(2+). E114 to G117 is a binding site for ATP.

Belongs to the dethiobiotin synthetase family. In terms of assembly, homodimer. It depends on Mg(2+) as a cofactor.

The protein resides in the cytoplasm. It carries out the reaction (7R,8S)-7,8-diammoniononanoate + CO2 + ATP = (4R,5S)-dethiobiotin + ADP + phosphate + 3 H(+). Its pathway is cofactor biosynthesis; biotin biosynthesis; biotin from 7,8-diaminononanoate: step 1/2. In terms of biological role, catalyzes a mechanistically unusual reaction, the ATP-dependent insertion of CO2 between the N7 and N8 nitrogen atoms of 7,8-diaminopelargonic acid (DAPA, also called 7,8-diammoniononanoate) to form a ureido ring. This Sulfurovum sp. (strain NBC37-1) protein is ATP-dependent dethiobiotin synthetase BioD.